The primary structure comprises 417 residues: Serine hydroxymethyltransferase (417 aa).

(6S)-5,6,7,8-tetrahydrofolate-binding positions include Leu-121 and 125–127; that span reads GHL. Lys-229 bears the N6-(pyridoxal phosphate)lysine mark. 355 to 357 contacts (6S)-5,6,7,8-tetrahydrofolate; that stretch reads SPF.

This sequence belongs to the SHMT family. As to quaternary structure, homodimer. It depends on pyridoxal 5'-phosphate as a cofactor.

The protein localises to the cytoplasm. The enzyme catalyses (6R)-5,10-methylene-5,6,7,8-tetrahydrofolate + glycine + H2O = (6S)-5,6,7,8-tetrahydrofolate + L-serine. Its pathway is one-carbon metabolism; tetrahydrofolate interconversion. The protein operates within amino-acid biosynthesis; glycine biosynthesis; glycine from L-serine: step 1/1. Its function is as follows. Catalyzes the reversible interconversion of serine and glycine with tetrahydrofolate (THF) serving as the one-carbon carrier. This reaction serves as the major source of one-carbon groups required for the biosynthesis of purines, thymidylate, methionine, and other important biomolecules. Also exhibits THF-independent aldolase activity toward beta-hydroxyamino acids, producing glycine and aldehydes, via a retro-aldol mechanism. The chain is Serine hydroxymethyltransferase from Xanthomonas euvesicatoria pv. vesicatoria (strain 85-10) (Xanthomonas campestris pv. vesicatoria).